Reading from the N-terminus, the 199-residue chain is Recombination protein RecR (199 aa).

A C4-type zinc finger spans residues 58-73; it reads CLVCGNVTGSDICPIC. Positions 81-176 constitute a Toprim domain; it reads GEICVVTDVA…AVTGLAQGVP (96 aa).

Belongs to the RecR family.

In terms of biological role, may play a role in DNA repair. It seems to be involved in an RecBC-independent recombinational process of DNA repair. It may act with RecF and RecO. The chain is Recombination protein RecR from Paracoccus denitrificans (strain Pd 1222).